Here is a 456-residue protein sequence, read N- to C-terminus: MSRAHGSPRSFFPVGNPFRVMFPGGAHLSRKLQELLASYEDALALSLRKLKPEAASDVLTLSWMRLAVDCLSELHTNIANLITDLELPVSDWDDKWVDIYLNSSVKLLDICIALSSELSRLDQGQLLLQYALHVLGSESGVPSQEQLKRAEPSLREWMELVGVRCPRLVSCSATLQELAGNLSLMKVKNSVKGKVLMRALYGIESVTVFVCSIFVAVLSGSPKPLVELHVPEKFGWSQAFNDLHTAVSEELTRQLAGGSVAAVKELEEVEACAKRLHVLASTSQLEEEAANLANAVSHTEEEVMSDSIVQEGDHHCGLKLADDTTRECEVVISESIAEEGTHEAEMKKDISYEKGVAMVERISYEEHQDSNVKQANGSSDESALVVPERTSVQESKEELLNCISSMSKSAEGLRHGLDSLSKRVGDFFQIVLTGRDALLCNLRISDAASKVAEVSS.

The helical transmembrane segment at 205–221 (SVTVFVCSIFVAVLSGS) threads the bilayer.

This sequence belongs to the ROH1 family.

It localises to the membrane. The polypeptide is UPF0496 protein 4 (Oryza sativa subsp. indica (Rice)).